A 427-amino-acid polypeptide reads, in one-letter code: Gamma-glutamyl phosphate reductase (427 aa).

The protein belongs to the gamma-glutamyl phosphate reductase family.

It is found in the cytoplasm. The catalysed reaction is L-glutamate 5-semialdehyde + phosphate + NADP(+) = L-glutamyl 5-phosphate + NADPH + H(+). Its pathway is amino-acid biosynthesis; L-proline biosynthesis; L-glutamate 5-semialdehyde from L-glutamate: step 2/2. In terms of biological role, catalyzes the NADPH-dependent reduction of L-glutamate 5-phosphate into L-glutamate 5-semialdehyde and phosphate. The product spontaneously undergoes cyclization to form 1-pyrroline-5-carboxylate. The chain is Gamma-glutamyl phosphate reductase from Rhizobium rhizogenes (strain K84 / ATCC BAA-868) (Agrobacterium radiobacter).